Reading from the N-terminus, the 360-residue chain is Serine/threonine-protein phosphatase 2A activator 2 (360 aa).

The protein belongs to the PTPA-type PPIase family.

Its subcellular location is the cytoplasm. It carries out the reaction [protein]-peptidylproline (omega=180) = [protein]-peptidylproline (omega=0). Functionally, PPIases accelerate the folding of proteins. It catalyzes the cis-trans isomerization of proline imidic peptide bonds in oligopeptides. Acts as a regulatory subunit for PP2A-like phosphatases modulating their activity or substrate specificity, probably by inducing a conformational change in the catalytic subunit, a direct target of the PPIase. Can reactivate inactive phosphatase PP2A-phosphatase methylesterase complexes (PP2Ai) in presence of ATP and Mg(2+) by dissociating the inactive form from the complex. This Kluyveromyces lactis (strain ATCC 8585 / CBS 2359 / DSM 70799 / NBRC 1267 / NRRL Y-1140 / WM37) (Yeast) protein is Serine/threonine-protein phosphatase 2A activator 2 (RRD2).